We begin with the raw amino-acid sequence, 188 residues long: Ribosome-recycling factor (188 aa).

Belongs to the RRF family.

The protein localises to the cytoplasm. Responsible for the release of ribosomes from messenger RNA at the termination of protein biosynthesis. May increase the efficiency of translation by recycling ribosomes from one round of translation to another. This Anaeromyxobacter dehalogenans (strain 2CP-1 / ATCC BAA-258) protein is Ribosome-recycling factor.